A 521-amino-acid polypeptide reads, in one-letter code: Cyclic AMP-responsive element-binding protein 3-like protein 2 (521 aa).

At 1–378 (MEVLESGEQS…CKLAGTQTGT (378 aa)) the chain is on the cytoplasmic side. The residue at position 93 (serine 93) is a Phosphoserine. Residue lysine 178 forms a Glycyl lysine isopeptide (Lys-Gly) (interchain with G-Cter in SUMO2) linkage. Serine 191 is subject to Phosphoserine. Residues 196-264 (SVDQLHLPPT…PHKLQGSGPL (69 aa)) are disordered. The segment covering 208–220 (SSHSSDSEGSLSP) has biased composition (low complexity). Residues 294-357 (ALKKIRRKIK…RTLLQQLQKL (64 aa)) form the bZIP domain. The tract at residues 296-325 (KKIRRKIKNKISAQESRRKKKEYMDSLEKK) is basic motif. The leucine-zipper stretch occupies residues 336-357 (LRKKVEVLENTNRTLLQQLQKL). The chain crosses the membrane as a helical; Signal-anchor for type II membrane protein span at residues 379 to 399 (CLMVVVLCFAVAFGSLFQGYG). Residues 400 to 521 (LYPSATKMAL…ELERRVNATF (122 aa)) are Lumenal-facing. An S1P recognition motif is present at residues 427-430 (RNLL). N-linked (GlcNAc...) asparagine glycosylation is found at asparagine 505 and asparagine 518.

The protein belongs to the bZIP family. ATF subfamily. As to quaternary structure, binds DNA as a dimer. In terms of processing, upon ER stress, translocated to the Golgi apparatus, where it is processed by regulated intramembrane proteolysis (RIP) to release the cytosol-facing N-terminal transcription factor domain. The cleavage is performed sequentially by site-1 and site-2 proteases (S1P/MBTPS1 and S2P/MBTPS2). Post-translationally, N-glycosylated. Ubiquitinated by HRD1/SYVN1; undergoes 'Lys-48'-linked ubiquitination, followed by rapid proteasomal degradation under normal conditions. Upon ER stress, SYVN1 E3 ubiquitin-protein ligase dissociates from its substrate, ubiquitination does not occur and CREB3L2 is stabilized.

The protein resides in the endoplasmic reticulum membrane. It is found in the nucleus. Functionally, transcription factor involved in unfolded protein response (UPR). In the absence of endoplasmic reticulum (ER) stress, inserted into ER membranes, with N-terminal DNA-binding and transcription activation domains oriented toward the cytosolic face of the membrane. In response to ER stress, transported to the Golgi, where it is cleaved in a site-specific manner by resident proteases S1P/MBTPS1 and S2P/MBTPS2. The released N-terminal cytosolic domain is translocated to the nucleus to effect transcription of specific target genes. Plays a critical role in chondrogenesis by activating the transcription of SEC23A, which promotes the transport and secretion of cartilage matrix proteins, and possibly that of ER biogenesis-related genes. In a neuroblastoma cell line, protects cells from ER stress-induced death. In vitro activates transcription of target genes via direct binding to the CRE site. In Rattus norvegicus (Rat), this protein is Cyclic AMP-responsive element-binding protein 3-like protein 2 (Creb3l2).